We begin with the raw amino-acid sequence, 1585 residues long: MENTGWMGKGHRMTPACPLLLSVILSLRLATAFDPAPSACSALASGVLYGAFSLQDLFPTIASGCSWTLENPDPTKYSLYLRFNRQEQVCAHFAPRLLPLDHYLVNFTCLRPSPEEAVAQAESEVGRPEEEEAEAAAGLELCSGSGPFTFLHFDKNFVQLCLSAEPSEAPRLLAPAALAFRFVEVLLINNNNSSQFTCGVLCRWSEECGRAAGRACGFAQPGCSCPGEAGAGSTTTTSPGPPAAHTLSNALVPGGPAPPAEADLHSGSSNDLFTTEMRYGEEPEEEPKVKTQWPRSADEPGLYMAQTGDPAAEEWSPWSVCSLTCGQGLQVRTRSCVSSPYGTLCSGPLRETRPCNNSATCPVHGVWEEWGSWSLCSRSCGRGSRSRMRTCVPPQHGGKACEGPELQTKLCSMAACPVEGQWLEWGPWGPCSTSCANGTQQRSRKCSVAGPAWATCTGALTDTRECSNLECPATDSKWGPWNAWSLCSKTCDTGWQRRFRMCQATGTQGYPCEGTGEEVKPCSEKRCPAFHEMCRDEYVMLMTWKKAAAGEIIYNKCPPNASGSASRRCLLSAQGVAYWGLPSFARCISHEYRYLYLSLREHLAKGQRMLAGEGMSQVVRSLQELLARRTYYSGDLLFSVDILRNVTDTFKRATYVPSADDVQRFFQVVSFMVDAENKEKWDDAQQVSPGSVHLLRVVEDFIHLVGDALKAFQSSLIVTDNLVISIQREPVSAVSSDITFPMRGRRGMKDWVRHSEDRLFLPKEVLSLSSPGKPATSGAAGSPGRGRGPGTVPPGPGHSHQRLLPADPDESSYFVIGAVLYRTLGLILPPPRPPLAVTSRVMTVTVRPPTQPPAEPLITVELSYIINGTTDPHCASWDYSRADASSGDWDTENCQTLETQAAHTRCQCQHLSTFAVLAQPPKDLTLELAGSPSVPLVIGCAVSCMALLTLLAIYAAFWRFIKSERSIILLNFCLSILASNILILVGQSRVLSKGVCTMTAAFLHFFFLSSFCWVLTEAWQSYLAVIGRMRTRLVRKRFLCLGWGLPALVVAVSVGFTRTKGYGTSSYCWLSLEGGLLYAFVGPAAVIVLVNMLIGIIVFNKLMARDGISDKSKKQRAGSERCPWASLLLPCSACGAVPSPLLSSASARNAMASLWSSCVVLPLLALTWMSAVLAMTDRRSVLFQALFAVFNSAQGFVITAVHCFLRREVQDVVKCQMGVCRADESEDSPDSCKNGQLQILSDFEKDVDLACQTVLFKEVNTCNPSTITGTLSRLSLDEDEEPKSCLVGPEGSLSFSPLPGNILVPMAASPGLGEPPPPQEANPVYMCGEGGLRQLDLTWLRPTEPGSEGDYMVLPRRTLSLQPGGGGGGGEDAPRARPEGTPRRAAKTVAHTEGYPSFLSVDHSGLGLGPAYGSLQNPYGMTFQPPPPTPSARQVPEPGERSRTMPRTVPGSTMKMGSLERKKLRYSDLDFEKVMHTRKRHSELYHELNQKFHTFDRYRSQSTAKREKRWSVSSGGAAERSVCTDKPSPGERPSLSQHRRHQSWSTFKSMTLGSLPPKPRERLTLHRAAAWEPTEPPDGDFQTEV.

The first 32 residues, 1-32 (MENTGWMGKGHRMTPACPLLLSVILSLRLATA), serve as a signal peptide directing secretion. Topologically, residues 33–936 (FDPAPSACSA…ELAGSPSVPL (904 aa)) are extracellular. N-linked (GlcNAc...) asparagine glycosylation is found at N106, N191, and N192. Over residues 229–238 (AGAGSTTTTS) the composition is skewed to low complexity. Residues 229 to 271 (AGAGSTTTTSPGPPAAHTLSNALVPGGPAPPAEADLHSGSSND) are disordered. S266 is a glycosylation site (O-linked (Xyl...) (chondroitin sulfate) serine). TSP type-1 domains are found at residues 309-362 (DPAA…ATCP), 364-417 (HGVW…AACP), 419-472 (EGQW…LECP), and 475-528 (DSKW…KRCP). Disulfide bonds link C321-C355, C325-C361, C336-C345, C376-C411, C380-C416, C391-C401, C431-C466, C435-C471, C446-C456, C487-C522, C491-C527, C502-C512, C534-C569, and C557-C587. The N-linked (GlcNAc...) asparagine glycan is linked to N356. N-linked (GlcNAc...) asparagine glycosylation occurs at N437. 2 N-linked (GlcNAc...) asparagine glycosylation sites follow: N560 and N645. The 168-residue stretch at 757-924 (DRLFLPKEVL…AVLAQPPKDL (168 aa)) folds into the GAIN-B domain. Residues 767-806 (SLSSPGKPATSGAAGSPGRGRGPGTVPPGPGHSHQRLLPA) are disordered. Low complexity predominate over residues 769-780 (SSPGKPATSGAA). The N-linked (GlcNAc...) asparagine glycan is linked to N867. 2 cysteine pairs are disulfide-bonded: C874/C906 and C894/C908. The GPS stretch occupies residues 874–924 (CASWDYSRADASSGDWDTENCQTLETQAAHTRCQCQHLSTFAVLAQPPKDL). Residues 937 to 957 (VIGCAVSCMALLTLLAIYAAF) form a helical membrane-spanning segment. The Cytoplasmic segment spans residues 958-965 (WRFIKSER). The helical transmembrane segment at 966 to 986 (SIILLNFCLSILASNILILVG) threads the bilayer. The Extracellular segment spans residues 987 to 994 (QSRVLSKG). Residues 995–1015 (VCTMTAAFLHFFFLSSFCWVL) traverse the membrane as a helical segment. Over 1016–1036 (TEAWQSYLAVIGRMRTRLVRK) the chain is Cytoplasmic. Residues 1037-1057 (RFLCLGWGLPALVVAVSVGFT) form a helical membrane-spanning segment. The Extracellular portion of the chain corresponds to 1058–1078 (RTKGYGTSSYCWLSLEGGLLY). A helical membrane pass occupies residues 1079-1099 (AFVGPAAVIVLVNMLIGIIVF). The Cytoplasmic portion of the chain corresponds to 1100–1121 (NKLMARDGISDKSKKQRAGSER). The chain crosses the membrane as a helical span at residues 1122–1142 (CPWASLLLPCSACGAVPSPLL). The Extracellular portion of the chain corresponds to 1143–1153 (SSASARNAMAS). The chain crosses the membrane as a helical span at residues 1154-1174 (LWSSCVVLPLLALTWMSAVLA). The Cytoplasmic portion of the chain corresponds to 1175-1585 (MTDRRSVLFQ…PPDGDFQTEV (411 aa)). Y1351 carries the post-translational modification Phosphotyrosine. 3 disordered regions span residues 1359–1385 (LSLQ…PRRA), 1423–1454 (FQPP…GSTM), and 1498–1585 (YRSQ…QTEV). Positions 1372-1382 (DAPRARPEGTP) are enriched in basic and acidic residues. The segment covering 1543-1552 (SWSTFKSMTL) has biased composition (polar residues). Acidic residues predominate over residues 1575 to 1585 (EPPDGDFQTEV).

The protein belongs to the G-protein coupled receptor 2 family. Adhesion G-protein coupled receptor (ADGR) subfamily. Heterodimer of 2 chains generated by proteolytic processing; the large extracellular N-terminal fragment and the membrane-bound C-terminal fragment predominantly remain associated and non-covalently linked. Interacts with GABPB2. Interacts (via carboxy-terminus) with TAX1BP3. Interacts with GNAZ. Interacts with SH3GL2. In terms of processing, glycosylated. Autoproteolytically processed at the GPS region of the GAIN-B domain; this cleavage modulates receptor activity. Additionally, furin is involved in the cleavage at another site, in the middle of the extracellular domain, generating a soluble fragment. Detected in cerebrospinal fluid (at protein level). Strongly expressed in brain. Also detected in heart, thymus, skeletal muscle, and different cell lines.

The protein resides in the cell membrane. The protein localises to the secreted. With respect to regulation, receptor activity is regulated by proteolytic processing. The long N-terminal has a an inhibitory effect on the constitutive signaling activity. Removal of the N-terminal region induces an increase of the receptor activity. Its function is as follows. Orphan G-protein coupled receptor involved in cell adhesion and probably in cell-cell interactions. Activates NFAT-signaling pathway, a transcription factor, via the G-protein GNAZ. Involved in angiogenesis inhibition. This chain is Adhesion G protein-coupled receptor B2, found in Homo sapiens (Human).